We begin with the raw amino-acid sequence, 969 residues long: Isoleucine--tRNA ligase (969 aa).

The 'HIGH' region signature appears at 68-78 (PYANGNLHMGH). An L-isoleucyl-5'-AMP-binding site is contributed by Glu-584. The short motif at 625–629 (KMSKS) is the 'KMSKS' region element. Lys-628 is an ATP binding site. Positions 938, 941, 958, and 961 each coordinate Zn(2+).

This sequence belongs to the class-I aminoacyl-tRNA synthetase family. IleS type 1 subfamily. Monomer. The cofactor is Zn(2+).

Its subcellular location is the cytoplasm. It catalyses the reaction tRNA(Ile) + L-isoleucine + ATP = L-isoleucyl-tRNA(Ile) + AMP + diphosphate. Its function is as follows. Catalyzes the attachment of isoleucine to tRNA(Ile). As IleRS can inadvertently accommodate and process structurally similar amino acids such as valine, to avoid such errors it has two additional distinct tRNA(Ile)-dependent editing activities. One activity is designated as 'pretransfer' editing and involves the hydrolysis of activated Val-AMP. The other activity is designated 'posttransfer' editing and involves deacylation of mischarged Val-tRNA(Ile). The polypeptide is Isoleucine--tRNA ligase (Prochlorococcus marinus (strain SARG / CCMP1375 / SS120)).